A 533-amino-acid chain; its full sequence is Putative phosphate permease HP_1491 (533 aa).

Helical transmembrane passes span 23–43 (IALALLFLIGAALLALIFGQA), 47–67 (GLLLIFAAVIGGYMAMNIGAN), 81–101 (AISMGGAILIAAICEMLGAII), 129–149 (VMLASLLSGALWLHVATLIGA), 156–176 (SVVGGIMGAGMAAAGMVAVNW), 182–202 (IVASWVISPLMGALIAMFFLM), 221–241 (VVPYLVALMSLTFSWYLIVKV), 248–268 (LNFEIQLACGCILALLIFILF), 286–306 (INELFNVPLIFAAALLSFAHG), 338–358 (VPLWIMVVGAAGIALGLSLYG), 372–392 (LDKMQAFCIALSAVITVLLAS), and 509–529 (LVTVPVSALLGALLFVALGFI).

It belongs to the inorganic phosphate transporter (PiT) (TC 2.A.20) family.

The protein localises to the cell membrane. In terms of biological role, potential transporter for phosphate. This chain is Putative phosphate permease HP_1491, found in Helicobacter pylori (strain ATCC 700392 / 26695) (Campylobacter pylori).